The following is a 211-amino-acid chain: Metalloproteinase inhibitor 3 (211 aa).

Positions 1 to 23 (MTPWLGLVVLLGSWSLGDWGAEA) are cleaved as a signal peptide. Residue Cys-24 participates in Zn(2+) binding. Involved in metalloproteinase-binding regions lie at residues 24–27 (CTCS) and 88–89 (ES). Intrachain disulfides connect Cys-24/Cys-91, Cys-26/Cys-118, Cys-36/Cys-143, Cys-145/Cys-192, Cys-150/Cys-155, and Cys-163/Cys-184. The NTR domain occupies 24 to 143 (CTCSPSHPQD…GLNYRYHLGC (120 aa)). Residues 105 to 188 (TGRVYDGKMY…SKHYACIRQK (84 aa)) form a mediates interaction with EFEMP1 region. A glycan (N-linked (GlcNAc...) asparagine) is linked at Asn-207.

This sequence belongs to the protease inhibitor I35 (TIMP) family. In terms of assembly, interacts with EFEMP1. Interacts with KDR.

The protein localises to the secreted. It is found in the extracellular space. Its subcellular location is the extracellular matrix. In terms of biological role, mediates a variety of processes including matrix regulation and turnover, inflammation, and angiogenesis, through reversible inhibition of zinc protease superfamily enzymes, primarily matrix metalloproteinases (MMPs). Regulates extracellular matrix (ECM) remodeling through inhibition of matrix metalloproteinases (MMP) including MMP-1, MMP-2, MMP-3, MMP-7, MMP-9, MMP-13, MMP-14 and MMP-15. Additionally, modulates the processing of amyloid precursor protein (APP) and apolipoprotein E receptor ApoER2 by inhibiting two alpha-secretases ADAM10 and ADAM17. Functions as a tumor suppressor and a potent inhibitor of angiogenesis. Exerts its anti-angiogenic effect by directly interacting with vascular endothelial growth factor (VEGF) receptor-2/KDR, preventing its binding to the VEGFA ligand. Selectively induces apoptosis in angiogenic endothelial cells through a caspase-independent cell death pathway. Mechanistically, inhibits matrix-induced focal adhesion kinase PTK2 tyrosine phosphorylation and association with paxillin/PXN and disrupts the incorporation of ITGB3, PTK2 and PXN into focal adhesion contacts on the matrix. The polypeptide is Metalloproteinase inhibitor 3 (TIMP3) (Bos taurus (Bovine)).